We begin with the raw amino-acid sequence, 436 residues long: Phosphomethylpyrimidine synthase (436 aa).

Substrate contacts are provided by residues asparagine 69, methionine 98, tyrosine 127, histidine 163, 185–187 (SRG), 226–229 (DACR), and glutamate 265. Histidine 269 is a binding site for Zn(2+). Residue tyrosine 292 coordinates substrate. Residue histidine 333 participates in Zn(2+) binding. Positions 409, 412, and 416 each coordinate [4Fe-4S] cluster.

This sequence belongs to the ThiC family. [4Fe-4S] cluster serves as cofactor.

The catalysed reaction is 5-amino-1-(5-phospho-beta-D-ribosyl)imidazole + S-adenosyl-L-methionine = 4-amino-2-methyl-5-(phosphooxymethyl)pyrimidine + CO + 5'-deoxyadenosine + formate + L-methionine + 3 H(+). The protein operates within cofactor biosynthesis; thiamine diphosphate biosynthesis. Functionally, catalyzes the synthesis of the hydroxymethylpyrimidine phosphate (HMP-P) moiety of thiamine from aminoimidazole ribotide (AIR) in a radical S-adenosyl-L-methionine (SAM)-dependent reaction. In Clostridium perfringens (strain SM101 / Type A), this protein is Phosphomethylpyrimidine synthase.